We begin with the raw amino-acid sequence, 305 residues long: Glycine--tRNA ligase alpha subunit (305 aa).

The protein belongs to the class-II aminoacyl-tRNA synthetase family. In terms of assembly, tetramer of two alpha and two beta subunits.

It is found in the cytoplasm. The enzyme catalyses tRNA(Gly) + glycine + ATP = glycyl-tRNA(Gly) + AMP + diphosphate. This Streptococcus sanguinis (strain SK36) protein is Glycine--tRNA ligase alpha subunit.